A 244-amino-acid chain; its full sequence is Glucosamine-6-phosphate deaminase (244 aa).

Asp-67 acts as the Proton acceptor; for enolization step in catalysis. Asn-136 functions as the For ring-opening step in the catalytic mechanism. The active-site Proton acceptor; for ring-opening step is His-138. Glu-143 acts as the For ring-opening step in catalysis.

This sequence belongs to the glucosamine/galactosamine-6-phosphate isomerase family. NagB subfamily.

The catalysed reaction is alpha-D-glucosamine 6-phosphate + H2O = beta-D-fructose 6-phosphate + NH4(+). It functions in the pathway amino-sugar metabolism; N-acetylneuraminate degradation; D-fructose 6-phosphate from N-acetylneuraminate: step 5/5. Catalyzes the reversible isomerization-deamination of glucosamine 6-phosphate (GlcN6P) to form fructose 6-phosphate (Fru6P) and ammonium ion. This chain is Glucosamine-6-phosphate deaminase, found in Clostridium botulinum (strain Okra / Type B1).